Here is a 353-residue protein sequence, read N- to C-terminus: Photosystem II protein D1 (353 aa).

The residue at position 2 (T2) is an N-acetylthreonine. T2 is modified (phosphothreonine). A run of 3 helical transmembrane segments spans residues Y29–S46, H118–L133, and W142–A156. Residue H118 participates in chlorophyll a binding. Y126 is a pheophytin a binding site. [CaMn4O5] cluster is bound by residues D170 and E189. A helical membrane pass occupies residues F197–L218. H198 is a chlorophyll a binding site. Residues H215 and S264–F265 each bind a quinone. Residue H215 participates in Fe cation binding. Residue H272 participates in Fe cation binding. The helical transmembrane segment at F274–L288 threads the bilayer. H332, E333, D342, and A344 together coordinate [CaMn4O5] cluster. A propeptide spanning residues A345–G353 is cleaved from the precursor.

It belongs to the reaction center PufL/M/PsbA/D family. PSII is composed of 1 copy each of membrane proteins PsbA, PsbB, PsbC, PsbD, PsbE, PsbF, PsbH, PsbI, PsbJ, PsbK, PsbL, PsbM, PsbT, PsbX, PsbY, PsbZ, Psb30/Ycf12, at least 3 peripheral proteins of the oxygen-evolving complex and a large number of cofactors. It forms dimeric complexes. The cofactor is The D1/D2 heterodimer binds P680, chlorophylls that are the primary electron donor of PSII, and subsequent electron acceptors. It shares a non-heme iron and each subunit binds pheophytin, quinone, additional chlorophylls, carotenoids and lipids. D1 provides most of the ligands for the Mn4-Ca-O5 cluster of the oxygen-evolving complex (OEC). There is also a Cl(-1) ion associated with D1 and D2, which is required for oxygen evolution. The PSII complex binds additional chlorophylls, carotenoids and specific lipids.. In terms of processing, tyr-161 forms a radical intermediate that is referred to as redox-active TyrZ, YZ or Y-Z. C-terminally processed by CTPA; processing is essential to allow assembly of the oxygen-evolving complex and thus photosynthetic growth.

Its subcellular location is the plastid. The protein resides in the chloroplast thylakoid membrane. It catalyses the reaction 2 a plastoquinone + 4 hnu + 2 H2O = 2 a plastoquinol + O2. Its function is as follows. Photosystem II (PSII) is a light-driven water:plastoquinone oxidoreductase that uses light energy to abstract electrons from H(2)O, generating O(2) and a proton gradient subsequently used for ATP formation. It consists of a core antenna complex that captures photons, and an electron transfer chain that converts photonic excitation into a charge separation. The D1/D2 (PsbA/PsbD) reaction center heterodimer binds P680, the primary electron donor of PSII as well as several subsequent electron acceptors. In Sinapis alba (White mustard), this protein is Photosystem II protein D1.